The following is a 366-amino-acid chain: Probable cinnamyl alcohol dehydrogenase 3 (366 aa).

Cys53 contributes to the Zn(2+) binding site. Ser55 serves as a coordination point for NADP(+). Zn(2+) is bound by residues His75, Glu76, Cys106, Cys109, Cys112, Cys120, and Cys169. Residues Thr173, 194–199 (GLGGLG), 217–222 (SSSPGK), Thr257, Gly281, and 304–306 (SNI) each bind NADP(+).

It belongs to the zinc-containing alcohol dehydrogenase family. As to quaternary structure, homodimer. The cofactor is Zn(2+).

It catalyses the reaction (E)-cinnamyl alcohol + NADP(+) = (E)-cinnamaldehyde + NADPH + H(+). It carries out the reaction (E)-coniferol + NADP(+) = (E)-coniferaldehyde + NADPH + H(+). The enzyme catalyses (E)-sinapyl alcohol + NADP(+) = (E)-sinapaldehyde + NADPH + H(+). The catalysed reaction is (E)-4-coumaroyl alcohol + NADP(+) = (E)-4-coumaraldehyde + NADPH + H(+). It catalyses the reaction (E)-caffeyl alcohol + NADP(+) = (E)-caffeyl aldehyde + NADPH + H(+). It participates in aromatic compound metabolism; phenylpropanoid biosynthesis. Its function is as follows. Involved in lignin biosynthesis. Catalyzes the final step specific for the production of lignin monomers. Catalyzes the NADPH-dependent reduction of coniferaldehyde, 5-hydroxyconiferaldehyde, sinapaldehyde, 4-coumaraldehyde and caffeyl aldehyde to their respective alcohols. This is Probable cinnamyl alcohol dehydrogenase 3 from Oryza sativa subsp. japonica (Rice).